A 71-amino-acid polypeptide reads, in one-letter code: Small ribosomal subunit protein bS21 (71 aa).

The segment covering Lys-49–Lys-59 has biased composition (basic residues). The segment at Lys-49 to Tyr-71 is disordered. Residues Val-60–Tyr-71 show a composition bias toward basic and acidic residues.

Belongs to the bacterial ribosomal protein bS21 family.

This chain is Small ribosomal subunit protein bS21, found in Colwellia psychrerythraea (strain 34H / ATCC BAA-681) (Vibrio psychroerythus).